We begin with the raw amino-acid sequence, 246 residues long: Uridylate kinase (246 aa).

11 to 14 (KLSG) serves as a coordination point for ATP. Gly-53 contacts UMP. The ATP site is built by Gly-54 and Arg-58. UMP is bound by residues Asp-73 and 134–141 (TGNPYFTT). Residues Thr-161, Tyr-167, and Asp-170 each coordinate ATP.

This sequence belongs to the UMP kinase family. Homohexamer.

It localises to the cytoplasm. The catalysed reaction is UMP + ATP = UDP + ADP. The protein operates within pyrimidine metabolism; CTP biosynthesis via de novo pathway; UDP from UMP (UMPK route): step 1/1. Its activity is regulated as follows. Inhibited by UTP. Catalyzes the reversible phosphorylation of UMP to UDP. This is Uridylate kinase from Leptospira borgpetersenii serovar Hardjo-bovis (strain JB197).